The chain runs to 2187 residues: Nascent polypeptide-associated complex subunit alpha, muscle-specific form (2187 aa).

Disordered stretches follow at residues 1-20 (MPGE…PQPQ), 32-73 (LKVA…STPF), and 172-196 (IPPL…KGTA). Polar residues predominate over residues 9 to 20 (VPATEQELPQPQ). Residues 178–192 (KTSTSQVPSQGTLNL) show a composition bias toward polar residues. Residue Arg-247 is modified to Asymmetric dimethylarginine. Disordered stretches follow at residues 335–370 (DSGA…LSPK), 579–611 (NTVS…SPLV), 738–835 (PKGS…PKDT), 884–1847 (KETL…PVEK), and 1892–2053 (PEAV…KAMS). Polar residues predominate over residues 347 to 369 (SAVTNELCSPPGSSNVAGTSLSP). The residue at position 590 (Thr-590) is a Phosphothreonine. Composition is skewed to polar residues over residues 599 to 609 (AKNTAPSTTSP), 818 to 835 (VTPT…PKDT), and 887 to 905 (LATS…TPKS). Ser-822 is subject to Phosphoserine. A compositionally biased stretch (pro residues) spans 941-951 (PHVPPTSPPKS). A compositionally biased stretch (low complexity) spans 976-998 (TPTYPKKSPKPAASKKTPATPSP). The span at 1106 to 1122 (TPQNATPNESLAASSQK) shows a compositional bias: polar residues. 2 positions are modified to phosphoserine: Ser-1174 and Ser-1177. Over residues 1174–1195 (SPLSPKKASKTAAPKEAPATPS) the composition is skewed to low complexity. Phosphothreonine is present on Thr-1364. Ser-1368 and Ser-1392 each carry phosphoserine. Thr-1398 is subject to Phosphothreonine. 2 positions are modified to phosphoserine: Ser-1400 and Ser-1423. A compositionally biased stretch (polar residues) spans 1429–1440 (VTPSSKKLSQTV). Residues 1489 to 1504 (SPSSPKKAPKTAAPPS) are compositionally biased toward low complexity. Residue Ser-1492 is modified to Phosphoserine. Polar residues predominate over residues 1609 to 1631 (PVTTSLAQTAPPSLQKAPSTTIP). Composition is skewed to low complexity over residues 1636–1670 (AAPA…TAPK) and 1714–1727 (SSPP…KRAS). Over residues 1762–1772 (ACSTGTTTPQA) the composition is skewed to polar residues. 2 stretches are compositionally biased toward low complexity: residues 1806–1823 (KSPG…CPDP) and 1892–1914 (PEAV…LAPS). A PXLXP motif is present at residues 1950-1954 (PPLIP). Pro residues predominate over residues 1973–1983 (APKPAGTPAPA). A compositionally biased stretch (acidic residues) spans 2001-2014 (SDSDESVPELEEQD). Ser-2015 is modified (phosphoserine; by ILK1). Over residues 2016-2029 (TQTATQQAQLAAAA) the composition is skewed to low complexity. Residues 2041 to 2052 (QSRSEKKARKAM) are required for DNA-binding. The NAC-A/B domain maps to 2042 to 2107 (SRSEKKARKA…AKIEDLSQQA (66 aa)). Ser-2104 carries the post-translational modification Phosphoserine. Lys-2114 carries the post-translational modification N6-acetyllysine; alternate. Residue Lys-2114 forms a Glycyl lysine isopeptide (Lys-Gly) (interchain with G-Cter in SUMO2); alternate linkage. Residue Thr-2131 is modified to Phosphothreonine; by GSK3-beta. Thr-2133 is modified (phosphothreonine). A phosphoserine mark is found at Ser-2138, Ser-2158, Ser-2163, and Ser-2175. The UBA domain maps to 2148–2185 (VEVKDIELVMSQANVSRAKAVRALKNNSNDIVNAIMEL).

The protein belongs to the NAC-alpha family. Interacts (via PXLXP motif) with the muscle-restricted histone methyltransferase SMYD1 (via MYND-type zinc finger). Phosphorylation of Ser-2015 by ILK during cell adhesion may promote nuclear localization. Phosphorylation of Thr-2131 by GSK3B may promote proteasome mediated degradation. In terms of tissue distribution, specifically expressed in heart and skeletal muscle: it is present in differentiated myotubes but not in myoblasts.

It localises to the cytoplasm. The protein resides in the nucleus. Cardiac- and muscle-specific transcription factor. May act to regulate the expression of genes involved in the development of myotubes. Plays a critical role in ventricular cardiomyocyte expansion and regulates postnatal skeletal muscle growth and regeneration. Involved in the organized assembly of thick and thin filaments of myofibril sarcomeres. The chain is Nascent polypeptide-associated complex subunit alpha, muscle-specific form (Naca) from Mus musculus (Mouse).